We begin with the raw amino-acid sequence, 766 residues long: Ent-copalyl diphosphate synthase 3 (766 aa).

Residues 1–30 (FRSTAAGRCLPVTCCVFPRHFRVSSSSILP) constitute a chloroplast transit peptide. Residue K222 participates in substrate binding. Residues D354 and D356 each contribute to the Mg(2+) site. The short motif at 354 to 357 (DVDD) is the DXDD motif element. K440 is a substrate binding site.

It belongs to the terpene synthase family. Tpsc subfamily. The cofactor is Mg(2+). As to expression, accumulates in leaves, and, at low levels, in germinating seeds.

It is found in the plastid. It localises to the chloroplast. The enzyme catalyses (2E,6E,10E)-geranylgeranyl diphosphate = ent-copalyl diphosphate. Its pathway is plant hormone biosynthesis; gibberellin biosynthesis. It participates in secondary metabolite biosynthesis; terpenoid biosynthesis. In terms of biological role, involved in the biosynthesis of ent-kaurene diterpenoids natural products such as oridonin, miltiradiene, eriocalyxin B and nezukol, known to exhibit antitumor, anti-inflammatory and antibacterial activities, and in the production of gibberellins phytohormones. Catalyzes the conversion of (2E,6E,10E)-geranylgeranyl diphosphate (GGPP) to ent-copalyl diphosphate (ent-CPP). This is Ent-copalyl diphosphate synthase 3 from Isodon eriocalyx (Plectranthus eriocalyx).